The primary structure comprises 144 residues: Large ribosomal subunit protein uL15 (144 aa).

Residues 1 to 57 (MELNNLKPAEGAKHAKRRVGRGIGSGLGKTAGRGHKGQKSRSGGFHKVGFEGGQMPL) are disordered. Gly residues predominate over residues 21–31 (RGIGSGLGKTA).

This sequence belongs to the universal ribosomal protein uL15 family. In terms of assembly, part of the 50S ribosomal subunit.

Its function is as follows. Binds to the 23S rRNA. The protein is Large ribosomal subunit protein uL15 of Paraburkholderia xenovorans (strain LB400).